The primary structure comprises 616 residues: E3 ubiquitin-protein ligase DTX4 (616 aa).

WWE domains follow at residues 1–78 and 79–155; these read MLLA…PVRR and NYYD…RVRR. Disordered regions lie at residues 223 to 254 and 355 to 387; these read VGKL…PSQV and PPPV…GKTP. A compositionally biased stretch (basic residues) spans 375–384; sequence KTTKKQAKKG. Residues 406-465 form an RING-type; atypical zinc finger; it reads CTICMERLTAPSGYKGPQPTVKPDLVGKLSRCGHIYHIYCLVAMYNNGNKDGSLQCPTCK.

The protein belongs to the Deltex family. Interacts with NLRP4. Expressed in brain, testis, embryonic fibroblasts and thymocytes.

Its subcellular location is the cytoplasm. It carries out the reaction S-ubiquitinyl-[E2 ubiquitin-conjugating enzyme]-L-cysteine + [acceptor protein]-L-lysine = [E2 ubiquitin-conjugating enzyme]-L-cysteine + N(6)-ubiquitinyl-[acceptor protein]-L-lysine.. It functions in the pathway protein modification; protein ubiquitination. In terms of biological role, functions as a ubiquitin ligase protein in vivo, mediating 'Lys48'-linked polyubiquitination and promoting degradation of TBK1, targeting to TBK1 requires interaction with NLRP4. Regulator of Notch signaling, a signaling pathway involved in cell-cell communications that regulates a broad spectrum of cell-fate determinations. This chain is E3 ubiquitin-protein ligase DTX4 (Dtx4), found in Mus musculus (Mouse).